The chain runs to 523 residues: MSLQTNHRPVLVVDFGAQYAQLIARRVREAGIYSEVIPHTATADDVRAKNAAALVLSGGPSSVYAEGAPSLDAEILDLGLPVFGICYGFQAMTHALGGTVANTGKREYGRTDINVAGGVLHEGLEACHKVWMSHGDAVSEAPEGFVVTASSEGAPVAAFENKERKMAGVQYHPEVLHSPHGQAVLTRFLTEIAGLEQNWTAANIAEELIEKVREQIGEDGRAICGLSGGVDSAVAGALVQRAIGDRLTCVFVDHGLLRAGEREQVEKDFVAATGAKLVTVDERQAFLSKLAGVTEPEAKRKAIGAEFIRSFERAVAGVLEEAPEGSTVDFLVQGTLYPDVVESGGGSGTANIKSHHNVGGLPDDVEFKLVEPLRDLFKDEVRAVGRELGLPEEIVGRQPFPGPGLGIRIIGEVTEERLETLRHADLIARTELTAAGLDGVIWQCPVVLLADVRSVGVQGDGRTYGHPIVLRPVSSEDAMTADWTRLPYEVLEKISTRITNEVPDVNRVVLDVTSKPPGTIEWE.

The region spanning 9 to 198 is the Glutamine amidotransferase type-1 domain; the sequence is PVLVVDFGAQ…LTEIAGLEQN (190 aa). The active-site Nucleophile is the Cys86. Active-site residues include His172 and Glu174. A GMPS ATP-PPase domain is found at 199 to 397; sequence WTAANIAEEL…LGLPEEIVGR (199 aa). 227–233 is a binding site for ATP; the sequence is SGGVDSA.

In terms of assembly, homodimer.

The catalysed reaction is XMP + L-glutamine + ATP + H2O = GMP + L-glutamate + AMP + diphosphate + 2 H(+). The protein operates within purine metabolism; GMP biosynthesis; GMP from XMP (L-Gln route): step 1/1. Functionally, catalyzes the synthesis of GMP from XMP. The chain is GMP synthase [glutamine-hydrolyzing] from Corynebacterium glutamicum (strain R).